A 79-amino-acid polypeptide reads, in one-letter code: Large ribosomal subunit protein bL31c (79 aa).

This sequence belongs to the bacterial ribosomal protein bL31 family. Type A subfamily. Part of the 50S ribosomal subunit.

Its subcellular location is the plastid. The protein resides in the chloroplast. Binds the 23S rRNA. The polypeptide is Large ribosomal subunit protein bL31c (Gracilaria tenuistipitata var. liui (Red alga)).